We begin with the raw amino-acid sequence, 69 residues long: Fungal defensin oryzeasin (69 aa).

The signal sequence occupies residues 1–18 (MKLLTVAFSLLLLGQVHA). Residues 19–26 (SPLVLDKR) constitute a propeptide that is removed on maturation. 3 cysteine pairs are disulfide-bonded: Cys29/Cys60, Cys44/Cys66, and Cys48/Cys68.

The protein belongs to the invertebrate defensin family.

It localises to the secreted. Its subcellular location is the target cell membrane. Its function is as follows. Shows antibacterial activity against numerous Gram-positive bacteria. It selectively inhibits peptidoglycan biosynthesis through complex formation with the cell wall precursor lipid II (1:1 molar ratio) thus inhibiting cell wall synthesis. The chain is Fungal defensin oryzeasin from Aspergillus oryzae (strain ATCC 42149 / RIB 40) (Yellow koji mold).